We begin with the raw amino-acid sequence, 545 residues long: Pectinesterase/pectinesterase inhibitor (545 aa).

Residues 1-37 (MEINQPNLLEASKSCYSKITFFLLVISFAALVSTGFS) form the signal peptide. Positions 38–191 (SPELSLHHKI…ILRARTSLAI (154 aa)) are pectinesterase inhibitor. Residues 38–228 (SPELSLHHKI…RRLLQTLGKD (191 aa)) constitute a propeptide that is removed on maturation. A glycan (N-linked (GlcNAc...) asparagine) is linked at Asn-135. The segment at 232 to 530 (DIVVAKDGSG…TVAELIQGGS (299 aa)) is pectinesterase. Positions 307 and 337 each coordinate substrate. Cysteines 326 and 353 form a disulfide. Asp-360 functions as the Proton donor; for pectinesterase activity in the catalytic mechanism. Asn-375 carries N-linked (GlcNAc...) (complex) asparagine glycosylation. Catalysis depends on Asp-381, which acts as the Nucleophile; for pectinesterase activity. A disulfide bond links Cys-394 and Cys-428. Substrate is bound by residues Arg-449 and Trp-451.

The protein in the N-terminal section; belongs to the PMEI family. This sequence in the C-terminal section; belongs to the pectinesterase family. Post-translationally, N-glycosylated.

It is found in the secreted. The protein localises to the cell wall. The catalysed reaction is [(1-&gt;4)-alpha-D-galacturonosyl methyl ester](n) + n H2O = [(1-&gt;4)-alpha-D-galacturonosyl](n) + n methanol + n H(+). It participates in glycan metabolism; pectin degradation; 2-dehydro-3-deoxy-D-gluconate from pectin: step 1/5. Functionally, acts in the modification of cell walls via demethylesterification of cell wall pectin. The protein is Pectinesterase/pectinesterase inhibitor of Ficus pumila var. awkeotsang (Jelly fig).